Reading from the N-terminus, the 214-residue chain is Ras-related protein Rab-17 (214 aa).

Position 29 is a phosphoserine (serine 29). Positions 31, 32, 33, and 50 each coordinate GTP. Mg(2+) contacts are provided by threonine 33, threonine 50, and aspartate 73. The short motif at 43 to 54 (DFSNVLPTVGCA) is the Switch 1 element. The short motif at 75-91 (AGQEKYQSVCHLYFRGA) is the Switch 2 element. Positions 76, 132, 133, 135, and 163 each coordinate GTP. Residues 183–204 (RAGDTGSSRPQEGEAVALNQEP) form a disordered region. S-geranylgeranyl cysteine attachment occurs at residues cysteine 211 and cysteine 212.

This sequence belongs to the small GTPase superfamily. Rab family. Requires Mg(2+) as cofactor. In terms of tissue distribution, expressed in kidney, liver, and intestine mainly by epithelial cells. Expressed in hippocampus (at protein level).

It localises to the recycling endosome membrane. The protein resides in the melanosome. The protein localises to the cell projection. Its subcellular location is the dendrite. The enzyme catalyses GTP + H2O = GDP + phosphate + H(+). Regulated by guanine nucleotide exchange factors (GEFs) which promote the exchange of bound GDP for free GTP. Regulated by GTPase activating proteins (GAPs) which increase the GTP hydrolysis activity. Inhibited by GDP dissociation inhibitors (GDIs). Functionally, the small GTPases Rab are key regulators of intracellular membrane trafficking, from the formation of transport vesicles to their fusion with membranes. Rabs cycle between an inactive GDP-bound form and an active GTP-bound form that is able to recruit to membranes different set of downstream effectors directly responsible for vesicle formation, movement, tethering and fusion. RAB17 is involved in transcytosis, the directed movement of endocytosed material through the cell and its exocytosis from the plasma membrane at the opposite side. Mainly observed in epithelial cells, transcytosis mediates, for instance, the transcellular transport of immunoglobulins from the basolateral surface to the apical surface. Most probably controls membrane trafficking through apical recycling endosomes in a post-endocytic step of transcytosis. Required for melanosome transport and release from melanocytes, it also regulates dendrite and dendritic spine development. May also play a role in cell migration. The protein is Ras-related protein Rab-17 of Mus musculus (Mouse).